The primary structure comprises 134 residues: MALYEHVFLARQDVTSQQVESMIDTYKGVIEANGGKVEKTEMWGVKSLAYRIKKNRKAHFTLLNIDAPPAALAEMERQMRISEDILRFLTIRVEALETEPSAMMQKRDRDERKDRERGRRRDEDGFSGDRNEEN.

The segment at 99-134 (EPSAMMQKRDRDERKDRERGRRRDEDGFSGDRNEEN) is disordered. Basic and acidic residues predominate over residues 105–134 (QKRDRDERKDRERGRRRDEDGFSGDRNEEN).

This sequence belongs to the bacterial ribosomal protein bS6 family.

In terms of biological role, binds together with bS18 to 16S ribosomal RNA. In Methylobacterium nodulans (strain LMG 21967 / CNCM I-2342 / ORS 2060), this protein is Small ribosomal subunit protein bS6.